Consider the following 149-residue polypeptide: 3-dehydroquinate dehydratase (149 aa).

The Proton acceptor role is filled by Y26. Substrate contacts are provided by N78, H84, and D91. H104 functions as the Proton donor in the catalytic mechanism. Substrate contacts are provided by residues L105 to S106 and R115.

This sequence belongs to the type-II 3-dehydroquinase family. As to quaternary structure, homododecamer.

It catalyses the reaction 3-dehydroquinate = 3-dehydroshikimate + H2O. Its pathway is metabolic intermediate biosynthesis; chorismate biosynthesis; chorismate from D-erythrose 4-phosphate and phosphoenolpyruvate: step 3/7. Functionally, catalyzes a trans-dehydration via an enolate intermediate. The polypeptide is 3-dehydroquinate dehydratase (Polynucleobacter asymbioticus (strain DSM 18221 / CIP 109841 / QLW-P1DMWA-1) (Polynucleobacter necessarius subsp. asymbioticus)).